Consider the following 397-residue polypeptide: Iron-sulfur cluster assembly SufBD family protein Mb1497 (397 aa).

It belongs to the iron-sulfur cluster assembly SufBD family.

The chain is Iron-sulfur cluster assembly SufBD family protein Mb1497 from Mycobacterium bovis (strain ATCC BAA-935 / AF2122/97).